The following is a 194-amino-acid chain: Large ribosomal subunit protein bL25 (194 aa).

This sequence belongs to the bacterial ribosomal protein bL25 family. CTC subfamily. As to quaternary structure, part of the 50S ribosomal subunit; part of the 5S rRNA/L5/L18/L25 subcomplex. Contacts the 5S rRNA. Binds to the 5S rRNA independently of L5 and L18.

Functionally, this is one of the proteins that binds to the 5S RNA in the ribosome where it forms part of the central protuberance. This is Large ribosomal subunit protein bL25 from Geotalea uraniireducens (strain Rf4) (Geobacter uraniireducens).